A 758-amino-acid polypeptide reads, in one-letter code: 5-methyltetrahydropteroyltriglutamate--homocysteine methyltransferase (758 aa).

5-methyltetrahydropteroyltri-L-glutamate is bound by residues 17-20 (RELK) and K114. L-homocysteine contacts are provided by residues 429-431 (IGS) and E482. L-methionine is bound by residues 429-431 (IGS) and E482. 5-methyltetrahydropteroyltri-L-glutamate-binding positions include 513-514 (RC) and W559. L-homocysteine is bound at residue D597. Residue D597 participates in L-methionine binding. Position 603 (E603) interacts with 5-methyltetrahydropteroyltri-L-glutamate. Zn(2+) is bound by residues H639, C641, and E663. Catalysis depends on H692, which acts as the Proton donor. C724 contributes to the Zn(2+) binding site.

It belongs to the vitamin-B12 independent methionine synthase family. The cofactor is Zn(2+).

The catalysed reaction is 5-methyltetrahydropteroyltri-L-glutamate + L-homocysteine = tetrahydropteroyltri-L-glutamate + L-methionine. Its pathway is amino-acid biosynthesis; L-methionine biosynthesis via de novo pathway; L-methionine from L-homocysteine (MetE route): step 1/1. Its function is as follows. Catalyzes the transfer of a methyl group from 5-methyltetrahydrofolate to homocysteine resulting in methionine formation. The protein is 5-methyltetrahydropteroyltriglutamate--homocysteine methyltransferase of Buchnera aphidicola subsp. Acyrthosiphon pisum (strain APS) (Acyrthosiphon pisum symbiotic bacterium).